Reading from the N-terminus, the 163-residue chain is DNA endonuclease I-CreI (163 aa).

Residues Gly-19 and Asp-20 each contribute to the Mg(2+) site. Interaction with DNA regions lie at residues 26-38 (QIKP…FKHQ), 44-47 (QVTQ), 68-70 (RDR), and 138-143 (SKTRKT).

The protein belongs to the LAGLIDADG endonuclease family. In terms of assembly, homodimer. It depends on Mg(2+) as a cofactor. The cofactor is Mn(2+). Requires Co(2+) as cofactor. Ni(2+) serves as cofactor. Zn(2+) is required as a cofactor.

It localises to the plastid. It is found in the chloroplast. Functionally, endonuclease involved in group I intron homing. Recognizes and cleaves a 19-24 bp palindromic DNA site. In Chlamydomonas reinhardtii (Chlamydomonas smithii), this protein is DNA endonuclease I-CreI.